The sequence spans 403 residues: D-galactonate dehydratase family member ManD (403 aa).

The substrate site is built by Asn-37 and His-122. Tyr-159 serves as the catalytic Proton donor/acceptor. Position 211 (Asp-211) interacts with Mg(2+). His-213 serves as the catalytic Proton donor/acceptor. Glu-237 and Glu-263 together coordinate Mg(2+). Substrate contacts are provided by Glu-263, Arg-284, His-313, Asp-317, and Glu-340.

It belongs to the mandelate racemase/muconate lactonizing enzyme family. GalD subfamily. Mg(2+) is required as a cofactor.

It catalyses the reaction D-mannonate = 2-dehydro-3-deoxy-D-gluconate + H2O. It carries out the reaction D-gluconate = 2-dehydro-3-deoxy-D-gluconate + H2O. Has low dehydratase activity with D-mannonate and D-gluconate, suggesting that these are not physiological substrates and that it has no significant role in the in vivo degradation of these compounds. Has no detectable activity with a panel of 70 other acid sugars (in vitro). The sequence is that of D-galactonate dehydratase family member ManD (manD) from Chromohalobacter salexigens (strain ATCC BAA-138 / DSM 3043 / CIP 106854 / NCIMB 13768 / 1H11).